A 249-amino-acid chain; its full sequence is NADH-quinone oxidoreductase subunit C (249 aa).

The interval 1–29 (MTENQTTPDPGEPGSSADRPGGLVPTGDS) is disordered.

Belongs to the complex I 30 kDa subunit family. As to quaternary structure, NDH-1 is composed of 14 different subunits. Subunits NuoB, C, D, E, F, and G constitute the peripheral sector of the complex.

The protein resides in the cell membrane. It carries out the reaction a quinone + NADH + 5 H(+)(in) = a quinol + NAD(+) + 4 H(+)(out). In terms of biological role, NDH-1 shuttles electrons from NADH, via FMN and iron-sulfur (Fe-S) centers, to quinones in the respiratory chain. The immediate electron acceptor for the enzyme in this species is believed to be a menaquinone. Couples the redox reaction to proton translocation (for every two electrons transferred, four hydrogen ions are translocated across the cytoplasmic membrane), and thus conserves the redox energy in a proton gradient. This chain is NADH-quinone oxidoreductase subunit C, found in Saccharopolyspora erythraea (strain ATCC 11635 / DSM 40517 / JCM 4748 / NBRC 13426 / NCIMB 8594 / NRRL 2338).